We begin with the raw amino-acid sequence, 120 residues long: Adenosylhomocysteinase (120 aa).

Asn34 lines the NAD(+) pocket.

The protein belongs to the adenosylhomocysteinase family. NAD(+) serves as cofactor.

The protein localises to the cytoplasm. It catalyses the reaction S-adenosyl-L-homocysteine + H2O = L-homocysteine + adenosine. It functions in the pathway amino-acid biosynthesis; L-homocysteine biosynthesis; L-homocysteine from S-adenosyl-L-homocysteine: step 1/1. In terms of biological role, may play a key role in the regulation of the intracellular concentration of adenosylhomocysteine. This is Adenosylhomocysteinase (ahcY) from Streptomyces fradiae (Streptomyces roseoflavus).